A 359-amino-acid polypeptide reads, in one-letter code: Peroxisome assembly protein 12 (359 aa).

Residues 1–19 (MAEHGAHFTAASVADDQPS) are Peroxisomal matrix-facing. The helical transmembrane segment at 20–47 (IFEVVAQDSLMTAVRPALQHVVKVLAES) threads the bilayer. Residues 48–51 (NPTH) are Cytoplasmic-facing. Residues 52 to 76 (YGFLWRWFDEIFTLLDLLLQQHYLS) traverse the membrane as a helical segment. The Peroxisomal matrix segment spans residues 77–109 (RTSASFSENFYGLKRIVMGDTHKSQRLASAGLP). Residues 110–139 (KQQLWKSIMFLVLLPYLKVKLEKLVSSLRE) form a helical membrane-spanning segment. The Cytoplasmic segment spans residues 140 to 144 (EDEYS). Residues 145 to 183 (IHPPSSRWKRFYRAFLAAYPFVNMAWEGWFLVQQLRYIL) form a helical membrane-spanning segment. The Peroxisomal matrix portion of the chain corresponds to 184–249 (GKAQHHSPLL…VGGVALSLST (66 aa)). A helical membrane pass occupies residues 250–277 (GLSVGVFFLQFLDWWYSSENQETIKSLT). Over 278–359 (ALPTPPPPVH…HLIKLYSPEN (82 aa)) the chain is Cytoplasmic. Zn(2+)-binding residues include C304, C307, C325, and C328. The RING-type; degenerate zinc finger occupies 304–343 (CPLCRKTRVNDTVLATSGYVFCYRCVFHYVRSHQACPITG).

The protein belongs to the pex2/pex10/pex12 family. In terms of assembly, component of the PEX2-PEX10-PEX12 retrotranslocation channel, composed of PEX2, PEX10 and PEX12. Interacts with PEX19 via its cytoplasmic domain.

The protein resides in the peroxisome membrane. Its pathway is protein modification; protein ubiquitination. Its function is as follows. Component of a retrotranslocation channel required for peroxisome organization by mediating export of the PEX5 receptor from peroxisomes to the cytosol, thereby promoting PEX5 recycling. The retrotranslocation channel is composed of PEX2, PEX10 and PEX12; each subunit contributing transmembrane segments that coassemble into an open channel that specifically allows the passage of PEX5 through the peroxisomal membrane. PEX12 also regulates PEX5 recycling by activating the E3 ubiquitin-protein ligase activity of PEX10. When PEX5 recycling is compromised, PEX12 stimulates PEX10-mediated polyubiquitination of PEX5, leading to its subsequent degradation. This chain is Peroxisome assembly protein 12, found in Homo sapiens (Human).